Here is a 150-residue protein sequence, read N- to C-terminus: Large ribosomal subunit protein bL9 (150 aa).

This sequence belongs to the bacterial ribosomal protein bL9 family.

Binds to the 23S rRNA. The chain is Large ribosomal subunit protein bL9 from Polaromonas naphthalenivorans (strain CJ2).